The following is a 101-amino-acid chain: Urease subunit beta (101 aa).

It belongs to the urease beta subunit family. Heterotrimer of UreA (gamma), UreB (beta) and UreC (alpha) subunits. Three heterotrimers associate to form the active enzyme.

It is found in the cytoplasm. It catalyses the reaction urea + 2 H2O + H(+) = hydrogencarbonate + 2 NH4(+). The protein operates within nitrogen metabolism; urea degradation; CO(2) and NH(3) from urea (urease route): step 1/1. This chain is Urease subunit beta, found in Bradyrhizobium sp. (strain ORS 278).